A 277-amino-acid chain; its full sequence is Pantothenate synthetase (277 aa).

26–33 (MGNLHEGH) contributes to the ATP binding site. Residue histidine 33 is the Proton donor of the active site. Glutamine 57 serves as a coordination point for (R)-pantoate. Glutamine 57 provides a ligand contact to beta-alanine. Residue 144–147 (GKKD) participates in ATP binding. Glutamine 150 serves as a coordination point for (R)-pantoate. ATP contacts are provided by residues glycine 173 and 181–184 (LSSR).

The protein belongs to the pantothenate synthetase family. As to quaternary structure, homodimer.

The protein localises to the cytoplasm. The catalysed reaction is (R)-pantoate + beta-alanine + ATP = (R)-pantothenate + AMP + diphosphate + H(+). It functions in the pathway cofactor biosynthesis; (R)-pantothenate biosynthesis; (R)-pantothenate from (R)-pantoate and beta-alanine: step 1/1. Catalyzes the condensation of pantoate with beta-alanine in an ATP-dependent reaction via a pantoyl-adenylate intermediate. The protein is Pantothenate synthetase of Chromobacterium violaceum (strain ATCC 12472 / DSM 30191 / JCM 1249 / CCUG 213 / NBRC 12614 / NCIMB 9131 / NCTC 9757 / MK).